A 56-amino-acid chain; its full sequence is Protein SspF (56 aa).

It belongs to the alpha/beta-type SASP family.

In terms of biological role, may play some important role in either sporulation or the dormant spore. The chain is Protein SspF (sspF) from Priestia megaterium (strain ATCC 12872 / QMB1551) (Bacillus megaterium).